Reading from the N-terminus, the 328-residue chain is Tetraacyldisaccharide 4'-kinase (328 aa).

Residue 55 to 62 (TAGGNGKT) coordinates ATP.

It belongs to the LpxK family.

It carries out the reaction a lipid A disaccharide + ATP = a lipid IVA + ADP + H(+). The protein operates within glycolipid biosynthesis; lipid IV(A) biosynthesis; lipid IV(A) from (3R)-3-hydroxytetradecanoyl-[acyl-carrier-protein] and UDP-N-acetyl-alpha-D-glucosamine: step 6/6. Its function is as follows. Transfers the gamma-phosphate of ATP to the 4'-position of a tetraacyldisaccharide 1-phosphate intermediate (termed DS-1-P) to form tetraacyldisaccharide 1,4'-bis-phosphate (lipid IVA). In Escherichia coli (strain SMS-3-5 / SECEC), this protein is Tetraacyldisaccharide 4'-kinase.